Consider the following 196-residue polypeptide: Calmodulin-like protein 4 (196 aa).

Residues 1 to 43 (MAAEHLLPGPPPSLADFRLEAGGKGTERGSGSSKPTGSSRGPR) form a disordered region. Residues 17–27 (FRLEAGGKGTE) are compositionally biased toward basic and acidic residues. Over residues 29-39 (GSGSSKPTGSS) the composition is skewed to polar residues. EF-hand domains lie at 51 to 86 (DQIN…LGAS), 87 to 122 (PTPG…QIKQ), 124 to 159 (DPKK…LGEK), and 160 to 195 (LTHK…PGRD).

This sequence belongs to the calmodulin family. As to quaternary structure, interacts with MYO7B; the interaction mediates the association of CALML4 with the IMAC/intermicrovillar adhesion complex. Interacts with MYO7A. In terms of tissue distribution, expressed in the intestinal tract. As to expression, dominant transcript in the intestinal tract.

The protein resides in the cell projection. The protein localises to the microvillus. Its function is as follows. As part of the intermicrovillar adhesion complex/IMAC plays a role in epithelial brush border differentiation, controlling microvilli organization and length. Acts as a light chain for MYO7B and is required for efficient targeting of the IMAC to the tips of border brush microvilli. This Homo sapiens (Human) protein is Calmodulin-like protein 4.